A 342-amino-acid polypeptide reads, in one-letter code: MSRLKQPIFLKKIKKVINTIPRLEEQIFACRNKKRSDNPLLFIDRKDEERILMSLYFMENESSSPHSILCFIYWRYTKKIYRLSEDIVSDVANTYVDNIPAQILKELPSWSIYVSAENLHTILPTSYPIHGFFFYPFLNGGGGIIQLFIIDNLKQSQGTTGLKEKNIDVVGGIIGMEDSRGGLLGSRKMECIDNEVVVTVNEKLKDFRDREFNLLNAQISMVLYICSQINDIKEKNQFKRSEKHKKHVHTHHELPAHNIREWDVGIRMGQAIRQYRQQNPQDRATHRCKRPHIRRDTGIHTDRSKKPKLAHERKPRLIWLPPVPVNLEDVNKLPVVITPIDK.

A DNA-binding region (H-T-H motif) is located at residues 208–227; sequence RDREFNLLNAQISMVLYICS.

Its function is as follows. Transcriptional inhibitor of the F plasmid transfer genes. FinQ may regulate a gene or genes encoded on the IncI plasmids, and coincidentally may inhibit F transfer when coresident. This chain is Protein FinQ (finQ), found in Escherichia coli.